Here is a 198-residue protein sequence, read N- to C-terminus: MECSSFEAICNESEMIAHLQSLFWSSSDADPCFGSSSFSLISSEGYDTMTTEFVNSSTNVCFDYQDDSFVSAEETTIGNKRKVQMDTENELMTNRSKEVRTKMSVSKACKHSVSAESSQSYYAKNRRQRINERLRILQELIPNGTKVDISTMLEEAIQYVKFLHLQIKLLSSDEMWMYAPLAFDSGNNRLYQNSLSQE.

A basic motif; degenerate region spans residues 114-127; the sequence is SAESSQSYYAKNRR. The bHLH domain occupies 114–163; the sequence is SAESSQSYYAKNRRQRINERLRILQELIPNGTKVDISTMLEEAIQYVKFL. Residues 128–163 are helix-loop-helix motif; the sequence is QRINERLRILQELIPNGTKVDISTMLEEAIQYVKFL.

It belongs to the bHLH protein family.

The protein resides in the nucleus. In terms of biological role, transcription factor that acts as a regulator of iron homeostasis. May act as negative regulator of iron transportation from root to shoot. Does not seem to be involved in the suppression of the induction of iron deficiency responsive genes. This chain is Transcription factor BHLH133, found in Oryza sativa subsp. japonica (Rice).